The sequence spans 494 residues: Sulfate adenylyltransferase subunit 1 (494 aa).

The 217-residue stretch at 24–240 (TRPLRLITCG…LELATVRSAQ (217 aa)) folds into the tr-type G domain. The interval 33 to 40 (GSVDDGKS) is G1. 33–40 (GSVDDGKS) provides a ligand contact to GTP. The segment at 91-95 (GITID) is G2. The G3 stretch occupies residues 112–115 (DTPG). GTP contacts are provided by residues 112-116 (DTPGH) and 167-170 (NKID). The G4 stretch occupies residues 167–170 (NKID). The segment at 204 to 206 (SAL) is G5.

It belongs to the TRAFAC class translation factor GTPase superfamily. Classic translation factor GTPase family. CysN/NodQ subfamily. Heterodimer composed of CysD, the smaller subunit, and CysN.

The catalysed reaction is sulfate + ATP + H(+) = adenosine 5'-phosphosulfate + diphosphate. The protein operates within sulfur metabolism; hydrogen sulfide biosynthesis; sulfite from sulfate: step 1/3. With CysD forms the ATP sulfurylase (ATPS) that catalyzes the adenylation of sulfate producing adenosine 5'-phosphosulfate (APS) and diphosphate, the first enzymatic step in sulfur assimilation pathway. APS synthesis involves the formation of a high-energy phosphoric-sulfuric acid anhydride bond driven by GTP hydrolysis by CysN coupled to ATP hydrolysis by CysD. The protein is Sulfate adenylyltransferase subunit 1 of Rhizobium rhizogenes (strain K84 / ATCC BAA-868) (Agrobacterium radiobacter).